The following is a 311-amino-acid chain: Porphobilinogen deaminase (311 aa).

Position 242 is an S-(dipyrrolylmethanemethyl)cysteine (cysteine 242).

The protein belongs to the HMBS family. In terms of assembly, monomer. Requires dipyrromethane as cofactor.

It carries out the reaction 4 porphobilinogen + H2O = hydroxymethylbilane + 4 NH4(+). The protein operates within porphyrin-containing compound metabolism; protoporphyrin-IX biosynthesis; coproporphyrinogen-III from 5-aminolevulinate: step 2/4. Its function is as follows. Tetrapolymerization of the monopyrrole PBG into the hydroxymethylbilane pre-uroporphyrinogen in several discrete steps. This chain is Porphobilinogen deaminase (hemC), found in Neisseria meningitidis serogroup A / serotype 4A (strain DSM 15465 / Z2491).